The chain runs to 443 residues: Histidinol dehydrogenase (443 aa).

Positions 141, 203, and 226 each coordinate NAD(+). The substrate site is built by serine 249, glutamine 271, and histidine 274. Glutamine 271 and histidine 274 together coordinate Zn(2+). Catalysis depends on proton acceptor residues glutamate 339 and histidine 340. 4 residues coordinate substrate: histidine 340, aspartate 373, glutamate 427, and histidine 432. Zn(2+) is bound at residue aspartate 373. Residue histidine 432 coordinates Zn(2+).

It belongs to the histidinol dehydrogenase family. It depends on Zn(2+) as a cofactor.

It carries out the reaction L-histidinol + 2 NAD(+) + H2O = L-histidine + 2 NADH + 3 H(+). It functions in the pathway amino-acid biosynthesis; L-histidine biosynthesis; L-histidine from 5-phospho-alpha-D-ribose 1-diphosphate: step 9/9. Its function is as follows. Catalyzes the sequential NAD-dependent oxidations of L-histidinol to L-histidinaldehyde and then to L-histidine. In Chlorobium luteolum (strain DSM 273 / BCRC 81028 / 2530) (Pelodictyon luteolum), this protein is Histidinol dehydrogenase.